The following is a 92-amino-acid chain: uncharacterized protein (92 aa).

This is an uncharacterized protein from Escherichia coli O157:H7.